The chain runs to 327 residues: 4-hydroxyproline 2-epimerase (327 aa).

The active-site Proton acceptor is the cysteine 85. Residues 86-87, histidine 205, and aspartate 231 each bind substrate; that span reads GH. Cysteine 235 serves as the catalytic Proton donor. A substrate-binding site is contributed by 236-237; the sequence is GT.

Belongs to the proline racemase family.

It catalyses the reaction trans-4-hydroxy-L-proline = cis-4-hydroxy-D-proline. In terms of biological role, catalyzes the epimerization of trans-4-hydroxy-L-proline (t4LHyp) to cis-4-hydroxy-D-proline (c4DHyp). Displays no proline racemase activity. This chain is 4-hydroxyproline 2-epimerase, found in Roseibium alexandrii (strain DSM 17067 / NCIMB 14079 / DFL-11) (Labrenzia alexandrii).